We begin with the raw amino-acid sequence, 455 residues long: Alcohol acyl transferase 1 allele RGb (455 aa).

Residues His164 and Asn385 each act as proton acceptor in the active site.

This sequence belongs to the plant acyltransferase family.

In terms of biological role, involved in the biosynthesis of volatile esters which confer ripe apple fruit flavor. Alcohol acyl transferase that can use a wide range of alcohols as substrate to produce esters. The protein is Alcohol acyl transferase 1 allele RGb of Malus domestica (Apple).